A 460-amino-acid polypeptide reads, in one-letter code: RING finger protein DG17 (460 aa).

Residues 27-67 (CPICFEFIYKKQIYQCKSGHHACKECWEKSLETKKECMTCK) form an RING-type zinc finger. 2 TRAF-type zinc fingers span residues 141–194 (SHLI…KKEL) and 196–253 (THYK…SELQ). Residues 269-294 (IEKLTNQVGQSKKTHDELLKKIEDLS) are a coiled coil. In terms of domain architecture, MATH spans 320–448 (GYRNKWIISN…DDKLIIEIYI (129 aa)).

Belongs to the TNF receptor-associated factor family. A subfamily.

Its subcellular location is the cytoplasm. Functionally, probable adapter protein and signal transducer that links members of the tumor necrosis factor receptor family to different signaling pathways by association with the receptor cytoplasmic domain and kinases. This is RING finger protein DG17 (zfaA) from Dictyostelium discoideum (Social amoeba).